Here is a 633-residue protein sequence, read N- to C-terminus: Terminal nucleotidyltransferase 4B (633 aa).

A disordered region spans residues M1–G115. The span at E25–H34 shows a compositional bias: polar residues. Low complexity-rich tracts occupy residues P36 to V52 and R60 to S70. Over residues A87–Q98 the composition is skewed to polar residues. Residues R103–G115 are compositionally biased toward gly residues. 2 residues coordinate Mg(2+): D191 and D193. The ATP site is built by G254, K279, S297, Y298, N382, and R386. The 61-residue stretch at N322 to N382 folds into the PAP-associated domain. The interval L484–R633 is disordered. Residues S492–D519 show a composition bias toward low complexity. K531 participates in a covalent cross-link: Glycyl lysine isopeptide (Lys-Gly) (interchain with G-Cter in SUMO2). Polar residues predominate over residues R542–V552. S545 carries the post-translational modification Phosphoserine. Glycyl lysine isopeptide (Lys-Gly) (interchain with G-Cter in SUMO2) cross-links involve residues K558, K573, and K587. Residues M559–Y614 show a composition bias toward polar residues. The short motif at K618 to R624 is the Basic, involved in binding of the RNA primer element.

It belongs to the DNA polymerase type-B-like family. In terms of assembly, component of a nucleolar TRAMP-like complex, an ATP-dependent exosome regulatory complex consisting of a helicase (MTREX), an oligadenylate polymerase (TENT4B or TENT4A), and a substrate specific RNA-binding factor (ZCCHC7 or ZCCHC8). Several TRAMP-like complexes exist with specific compositions and are associated with nuclear, or nucleolar RNA exosomes. Mg(2+) is required as a cofactor. Mn(2+) serves as cofactor.

Its subcellular location is the nucleus. It localises to the nucleolus. The protein resides in the cytoplasm. It catalyses the reaction RNA(n) + ATP = RNA(n)-3'-adenine ribonucleotide + diphosphate. Its function is as follows. Terminal nucleotidyltransferase that catalyzes preferentially the transfer of ATP and GTP on RNA 3' poly(A) tail creating a heterogeneous 3' poly(A) tail leading to mRNAs stabilization by protecting mRNAs from active deadenylation. Also functions as a catalytic subunit of a TRAMP-like complex which has a poly(A) RNA polymerase activity and is involved in a post-transcriptional quality control mechanism. Polyadenylation with short oligo(A) tails is required for the degradative activity of the exosome on several of its nuclear RNA substrates. Doesn't need a cofactor for polyadenylation activity (in vitro). Plays a role in replication-dependent histone mRNA degradation, probably through terminal uridylation of mature histone mRNAs. May play a role in sister chromatid cohesion. In Mus musculus (Mouse), this protein is Terminal nucleotidyltransferase 4B.